A 118-amino-acid chain; its full sequence is Acidic elicitin A1 (118 aa).

Positions 1-20 are cleaved as a signal peptide; sequence MNFRALFAATVAALVGSTSA. Intrachain disulfides connect Cys-23/Cys-91, Cys-47/Cys-76, and Cys-71/Cys-115.

The protein belongs to the elicitin family.

The protein resides in the secreted. Functionally, induces local and distal defense responses (incompatible hypersensitive reaction) in plants from the solanaceae and cruciferae families. Elicits leaf necrosis and causes the accumulation of pathogenesis-related proteins. Might interact with the lipidic molecules of the plasma membrane. The chain is Acidic elicitin A1 (B14) from Phytophthora cryptogea.